Here is a 190-residue protein sequence, read N- to C-terminus: Large ribosomal subunit protein bL9 (190 aa).

The protein belongs to the bacterial ribosomal protein bL9 family.

In terms of biological role, binds to the 23S rRNA. This Methylorubrum extorquens (strain CM4 / NCIMB 13688) (Methylobacterium extorquens) protein is Large ribosomal subunit protein bL9.